We begin with the raw amino-acid sequence, 279 residues long: Ultraviolet N-glycosylase/AP lyase (279 aa).

The 20-residue stretch at 123-142 (LEDLVALPGVGRKTAFVVLG) folds into the HhH domain. 4 residues coordinate [4Fe-4S] cluster: Cys203, Cys210, Cys213, and Cys219. Positions 256–279 (TAGAAGPRPRAGGXAPGLPAQPFR) are disordered.

This sequence belongs to the Nth/MutY family. Requires [4Fe-4S] cluster as cofactor.

Its function is as follows. DNA repair enzyme that has both DNA N-glycosylase activity and AP-lyase activity. Initiates repair at cis-syn pyrimidine dimers. Proceeds via an imino enzyme:DNA intermediate. The sequence is that of Ultraviolet N-glycosylase/AP lyase (pdg) from Micrococcus luteus (strain ATCC 4698 / DSM 20030 / JCM 1464 / CCM 169 / CCUG 5858 / IAM 1056 / NBRC 3333 / NCIMB 9278 / NCTC 2665 / VKM Ac-2230) (Micrococcus lysodeikticus).